A 2296-amino-acid chain; its full sequence is Protein Ycf2 (2296 aa).

1650-1657 (GSIGIGRS) is a binding site for ATP.

Belongs to the Ycf2 family.

The protein localises to the plastid. It localises to the chloroplast stroma. Probable ATPase of unknown function. Its presence in a non-photosynthetic plant (Epifagus virginiana) and experiments in tobacco indicate that it has an essential function which is probably not related to photosynthesis. This is Protein Ycf2 from Arabis hirsuta (Hairy rock-cress).